A 216-amino-acid chain; its full sequence is Probable chemoreceptor glutamine deamidase CheD (216 aa).

Belongs to the CheD family.

The enzyme catalyses L-glutaminyl-[protein] + H2O = L-glutamyl-[protein] + NH4(+). Its function is as follows. Probably deamidates glutamine residues to glutamate on methyl-accepting chemotaxis receptors (MCPs), playing an important role in chemotaxis. This is Probable chemoreceptor glutamine deamidase CheD from Halorhodospira halophila (strain DSM 244 / SL1) (Ectothiorhodospira halophila (strain DSM 244 / SL1)).